Reading from the N-terminus, the 192-residue chain is uncharacterized protein (192 aa).

Disordered regions lie at residues 1–37 and 146–192; these read MASS…PAFP and ARGP…EQNK. 2 stretches are compositionally biased toward pro residues: residues 8 to 19 and 159 to 180; these read TPSPAGLPPPSV and APPP…PGWP.

This is an uncharacterized protein from Homo sapiens (Human).